The sequence spans 131 residues: Bacteriohemerythrin (131 aa).

Fe cation-binding residues include H22, H58, E62, H77, H81, H117, and D122.

This sequence belongs to the hemerythrin family. Monomer.

Functionally, oxygen-binding protein. May be involved in a storage mechanism or for delivery to oxygen-requiring enzymes. The oxygen-binding site contains two iron atoms. The sequence is that of Bacteriohemerythrin from Methylococcus capsulatus (strain ATCC 33009 / NCIMB 11132 / Bath).